Here is a 512-residue protein sequence, read N- to C-terminus: 2,3-bisphosphoglycerate-independent phosphoglycerate mutase (512 aa).

Positions 18 and 68 each coordinate Mn(2+). Ser68 (phosphoserine intermediate) is an active-site residue. Residues His129, 159–160, Arg191, Arg197, 265–268, and Lys338 each bind substrate; these read RD and RPDR. Mn(2+) contacts are provided by Asp403, His407, Asp444, His445, and His462.

It belongs to the BPG-independent phosphoglycerate mutase family. As to quaternary structure, monomer. The cofactor is Mn(2+).

It carries out the reaction (2R)-2-phosphoglycerate = (2R)-3-phosphoglycerate. It functions in the pathway carbohydrate degradation; glycolysis; pyruvate from D-glyceraldehyde 3-phosphate: step 3/5. In terms of biological role, catalyzes the interconversion of 2-phosphoglycerate and 3-phosphoglycerate. The polypeptide is 2,3-bisphosphoglycerate-independent phosphoglycerate mutase (Mesomycoplasma hyopneumoniae (strain 232) (Mycoplasma hyopneumoniae)).